Here is a 357-residue protein sequence, read N- to C-terminus: MSIEEPSTQHIAQPQKYVGFDTITTQIENRLLKRGFQFNIMVVGRSGLGKSTLVNTLFSSKLTTSQGRKSPSEPIEKTTEIKVASHSLLENNVRLNINVIDTPGFGDQINNEKCWEPLVKYVKEQHSQYLRKELTAQRDKFLADTRVHCILYFIPPNGQKLKQLDVQALKKLSEIANVVPIIAKSDSLTLDERSEFKKLLQSEFMKYNFNIYPYDSEDLYEEERQLNEDIKSLIPFAIAGSETEIEINGEMVRGRKTKWGAINIEDVSQCEFVFLRDFLTRTHLQDLIETTALTHYETFRSKQLIALKENASNPNRQSQLQKDQGQTSQQSNQDLKNTSGVPNAPMFQSTTGTAAAR.

The Septin-type G domain maps to arginine 34–alanine 306. The interval glycine 44–serine 51 is G1 motif. Residues glycine 44 to serine 51, threonine 78, glycine 104, lysine 184 to glutamate 192, glycine 240, and arginine 255 each bind GTP. Residues aspartate 101–glycine 104 form a G3 motif region. Residues alanine 183–aspartate 186 are G4 motif. Residues asparagine 310–arginine 357 are disordered.

The protein belongs to the TRAFAC class TrmE-Era-EngA-EngB-Septin-like GTPase superfamily. Septin GTPase family.

It localises to the bud neck. Plays a role in the cell cycle. Involved in the formation of the ring of filaments in the neck region at the mother-bud junction during mitosis. The chain is Cell division control protein 10 (CDC10) from Candida albicans (strain SC5314 / ATCC MYA-2876) (Yeast).